A 316-amino-acid chain; its full sequence is Tyrosine--tRNA ligase 2 (316 aa).

Residues tyrosine 26, tyrosine 146, glutamine 150, aspartate 153, and glutamine 168 each contribute to the L-tyrosine site. A 'KMSKS' region motif is present at residues 219–223; the sequence is KMSKS. An ATP-binding site is contributed by lysine 222.

Belongs to the class-I aminoacyl-tRNA synthetase family. TyrS type 4 subfamily. Homodimer.

The protein resides in the cytoplasm. It catalyses the reaction tRNA(Tyr) + L-tyrosine + ATP = L-tyrosyl-tRNA(Tyr) + AMP + diphosphate + H(+). Functionally, catalyzes the attachment of tyrosine to tRNA(Tyr) in a two-step reaction: tyrosine is first activated by ATP to form Tyr-AMP and then transferred to the acceptor end of tRNA(Tyr). The chain is Tyrosine--tRNA ligase 2 from Pyrobaculum aerophilum (strain ATCC 51768 / DSM 7523 / JCM 9630 / CIP 104966 / NBRC 100827 / IM2).